The primary structure comprises 435 residues: Tol-Pal system protein TolB (435 aa).

An N-terminal signal peptide occupies residues 1–20 (MRKIIAGVFIFVFLISNLYA).

Belongs to the TolB family. As to quaternary structure, the Tol-Pal system is composed of five core proteins: the inner membrane proteins TolA, TolQ and TolR, the periplasmic protein TolB and the outer membrane protein Pal. They form a network linking the inner and outer membranes and the peptidoglycan layer.

The protein localises to the periplasm. Functionally, part of the Tol-Pal system, which plays a role in outer membrane invagination during cell division and is important for maintaining outer membrane integrity. The protein is Tol-Pal system protein TolB of Francisella tularensis subsp. holarctica (strain LVS).